An 826-amino-acid chain; its full sequence is Ribonucleoside-diphosphate reductase large subunit (826 aa).

Substrate is bound by residues Thr171, Ser186 to Cys187, Gly217, Asn387 to Glu391, and Pro594 to Cys598. Residues Cys187 and Cys403 are joined by a disulfide bond. Asn387 functions as the Proton acceptor in the catalytic mechanism. Cys389 serves as the catalytic Cysteine radical intermediate. Catalysis depends on Glu391, which acts as the Proton acceptor. The disordered stretch occupies residues Ser747–Pro769. A compositionally biased stretch (basic and acidic residues) spans Pro749–Pro758.

Belongs to the ribonucleoside diphosphate reductase large chain family. In terms of assembly, heterotetramer composed of a homodimer of the large subunit (R1) and a homodimer of the small subunit (R2). Larger multisubunit protein complex are also active, composed of (R1)n(R2)n.

It carries out the reaction a 2'-deoxyribonucleoside 5'-diphosphate + [thioredoxin]-disulfide + H2O = a ribonucleoside 5'-diphosphate + [thioredoxin]-dithiol. Functionally, ribonucleoside-diphosphate reductase holoenzyme provides the precursors necessary for viral DNA synthesis. Allows virus growth in non-dividing cells, as well as reactivation from latency in infected hosts. Catalyzes the biosynthesis of deoxyribonucleotides from the corresponding ribonucleotides. The polypeptide is Ribonucleoside-diphosphate reductase large subunit (Homo sapiens (Human)).